Here is a 104-residue protein sequence, read N- to C-terminus: L-rhamnose mutarotase (104 aa).

Tyr-18 is a binding site for substrate. His-22 (proton donor) is an active-site residue. Residues Tyr-41 and 76-77 each bind substrate; that span reads WW.

This sequence belongs to the rhamnose mutarotase family. In terms of assembly, homodimer.

The protein resides in the cytoplasm. The catalysed reaction is alpha-L-rhamnose = beta-L-rhamnose. The protein operates within carbohydrate metabolism; L-rhamnose metabolism. Its function is as follows. Involved in the anomeric conversion of L-rhamnose. This is L-rhamnose mutarotase from Escherichia fergusonii (strain ATCC 35469 / DSM 13698 / CCUG 18766 / IAM 14443 / JCM 21226 / LMG 7866 / NBRC 102419 / NCTC 12128 / CDC 0568-73).